Here is a 152-residue protein sequence, read N- to C-terminus: UPF0225 protein YchJ (152 aa).

The protein belongs to the UPF0225 family.

The protein is UPF0225 protein YchJ of Salmonella gallinarum (strain 287/91 / NCTC 13346).